Consider the following 209-residue polypeptide: Kynurenine formamidase (209 aa).

Phe18 provides a ligand contact to substrate. His48, His52, and Asp54 together coordinate Zn(2+). The Proton donor/acceptor role is filled by His58. Residues His160 and Glu172 each coordinate Zn(2+).

The protein belongs to the Cyclase 1 superfamily. KynB family. In terms of assembly, homodimer. Requires Zn(2+) as cofactor.

It catalyses the reaction N-formyl-L-kynurenine + H2O = L-kynurenine + formate + H(+). Its pathway is amino-acid degradation; L-tryptophan degradation via kynurenine pathway; L-kynurenine from L-tryptophan: step 2/2. Catalyzes the hydrolysis of N-formyl-L-kynurenine to L-kynurenine, the second step in the kynurenine pathway of tryptophan degradation. This is Kynurenine formamidase from Bordetella avium (strain 197N).